The following is a 356-amino-acid chain: Tyrosinase P (356 aa).

Residues Met1 to Gly19 form the signal peptide. Asn81 is a glycosylation site (N-linked (GlcNAc...) asparagine). Residues His87 and His96 each contribute to the Cu cation site. Asn148 and Asn193 each carry an N-linked (GlcNAc...) asparagine glycan. His203 lines the Cu cation pocket. N-linked (GlcNAc...) asparagine glycosylation occurs at Asn226. Residues His263 and His286 each coordinate Cu cation. An N-linked (GlcNAc...) asparagine glycan is attached at Asn309.

It belongs to the tyrosinase family. Requires Cu(2+) as cofactor. Glycosylated.

Its subcellular location is the endoplasmic reticulum lumen. It localises to the golgi apparatus lumen. The catalysed reaction is aspulvinone E + O2 = (5Z)-3-(3,4-dihydroxyphenyl)-5-[(3,4-dihydroxyphenyl)methylidene]-5-oxo-2,5-dihydrofuran-3-olate. It carries out the reaction aspulvinone E + O2 = (2Z)-2-[(3,4-dioxocyclohexa-1,5-dien-1-yl)methylidene]-4-(4-hydroxyphenyl)-5-oxo-2,5-dihydrofuran-3-olate + H2O. Activity is inhibited by the presence of dithiothreitol (DTT). Its function is as follows. Tyrosinase; part of the gene cluster that mediates the biosynthesis of Asp-melanin, a pigment that confers resistance against UV light and hampers phagocytosis by soil amoeba. The nonribosomal peptide synthase melA converts 4-hydroxyphenylpyruvate (4-HPPA) to aspulvinone E. The tyrosinase tyrP then performs hydroxylations of both aromatic moieties of aspulvinone E. The product of tyrP is highly unstable, and, due to the high reactivity of methides and ortho-diquinones, the polymeric Asp-melanin forms spontaneously. This chain is Tyrosinase P (tyrP), found in Aspergillus terreus.